We begin with the raw amino-acid sequence, 781 residues long: Protein argonaute (781 aa).

The region spanning 110–194 (SMNELLTERR…RHNDYCNSVM (85 aa)) is the PAZ domain. One can recognise a Piwi domain in the interval 436 to 760 (LVVIVIPGPK…LSKFCGEVLR (325 aa)).

It belongs to the argonaute family. Ago subfamily. In terms of assembly, interacts with miR2. Highly specific binding to the mRNA m7G-cap. May be a component of the RNA-induced silencing complex (RISC), a sequence-specific, multicomponent nuclease that destroys or silences messenger RNAs homologous to the silencing trigger.

Its subcellular location is the cytoplasm. In terms of biological role, plays an essential role in growth and, with Dicer, also involved in microRNA (miRNA)-mediated translational repression. The RNA interference pathway is implicated in antigenic variation having a role in regulation of variant-specific surface protein (VSP)-coding gene expression. Several VSP genes are transcribed but only transcripts encoding the VSP to be expressed accumulate. Antisense RNAs corresponding to the silenced VSP genes are detected. In Giardia intestinalis (Giardia lamblia), this protein is Protein argonaute.